The primary structure comprises 427 residues: Gamma-glutamyl phosphate reductase (427 aa).

Belongs to the gamma-glutamyl phosphate reductase family.

It is found in the cytoplasm. The enzyme catalyses L-glutamate 5-semialdehyde + phosphate + NADP(+) = L-glutamyl 5-phosphate + NADPH + H(+). Its pathway is amino-acid biosynthesis; L-proline biosynthesis; L-glutamate 5-semialdehyde from L-glutamate: step 2/2. Catalyzes the NADPH-dependent reduction of L-glutamate 5-phosphate into L-glutamate 5-semialdehyde and phosphate. The product spontaneously undergoes cyclization to form 1-pyrroline-5-carboxylate. In Rhizobium etli (strain CIAT 652), this protein is Gamma-glutamyl phosphate reductase.